Consider the following 1366-residue polypeptide: DNA-directed RNA polymerase subunit beta' (1366 aa).

Residues 1–20 (MTSSKPKKTSRVRKTTKNSK) are compositionally biased toward basic residues. The disordered stretch occupies residues 1–37 (MTSSKPKKTSRVRKTTKNSKKNNPVTMPVLPKTPPSF). Residues Cys248, Cys315, Cys322, and Cys325 each coordinate Zn(2+). The disordered stretch occupies residues 1292-1366 (TVDMPQSPAV…LQEEGLLSDE (75 aa)). Over residues 1354 to 1366 (LEGLQEEGLLSDE) the composition is skewed to low complexity.

The protein belongs to the RNA polymerase beta' chain family. RpoC2 subfamily. In cyanobacteria the RNAP catalytic core is composed of 2 alpha, 1 beta, 1 beta', 1 gamma and 1 omega subunit. When a sigma factor is associated with the core the holoenzyme is formed, which can initiate transcription. It depends on Zn(2+) as a cofactor.

It catalyses the reaction RNA(n) + a ribonucleoside 5'-triphosphate = RNA(n+1) + diphosphate. Functionally, DNA-dependent RNA polymerase catalyzes the transcription of DNA into RNA using the four ribonucleoside triphosphates as substrates. The sequence is that of DNA-directed RNA polymerase subunit beta' from Prochlorococcus marinus (strain MIT 9215).